Reading from the N-terminus, the 314-residue chain is Deoxymugineic acid synthase 1 (314 aa).

The segment at 1 to 21 (MGAGDRTVAGMPRIGMGTAVQ) is disordered. Asp-44 is a binding site for NADP(+). Tyr-49 acts as the Proton donor in catalysis. Residue His-112 participates in substrate binding. NADP(+) contacts are provided by residues 158–159 (AN), Gln-180, 258–266 (FDEARMREN), and 273–281 (ELTEEERRR).

Belongs to the aldo/keto reductase family.

It carries out the reaction 2'-deoxymugineate + NAD(+) = 3''-deamino-3''-oxonicotianamine + NADH + H(+). It catalyses the reaction 2'-deoxymugineate + NADP(+) = 3''-deamino-3''-oxonicotianamine + NADPH + H(+). Its pathway is siderophore biosynthesis. In terms of biological role, catalyzes the reduction of a 3''-keto intermediate during the biosynthesis of 2'-deoxymugineic acid (DMA) from L-Met. Involved in the formation of phytosiderophores (MAs) belonging to the mugineic acid family and required to acquire iron. The chain is Deoxymugineic acid synthase 1 from Hordeum vulgare (Barley).